Reading from the N-terminus, the 393-residue chain is Acetylornithine aminotransferase (393 aa).

Pyridoxal 5'-phosphate-binding positions include 102–103 (GA) and F136. Position 139 (R139) interacts with N(2)-acetyl-L-ornithine. 219-222 (DEVQ) lines the pyridoxal 5'-phosphate pocket. K248 is modified (N6-(pyridoxal phosphate)lysine). N(2)-acetyl-L-ornithine is bound at residue S274. Residue T275 coordinates pyridoxal 5'-phosphate.

Belongs to the class-III pyridoxal-phosphate-dependent aminotransferase family. ArgD subfamily. Homodimer. Pyridoxal 5'-phosphate is required as a cofactor.

It is found in the cytoplasm. It carries out the reaction N(2)-acetyl-L-ornithine + 2-oxoglutarate = N-acetyl-L-glutamate 5-semialdehyde + L-glutamate. The protein operates within amino-acid biosynthesis; L-arginine biosynthesis; N(2)-acetyl-L-ornithine from L-glutamate: step 4/4. The chain is Acetylornithine aminotransferase from Wolinella succinogenes (strain ATCC 29543 / DSM 1740 / CCUG 13145 / JCM 31913 / LMG 7466 / NCTC 11488 / FDC 602W) (Vibrio succinogenes).